Reading from the N-terminus, the 75-residue chain is Phi-liotoxin-Lw1a (75 aa).

Residues 1-25 (MNFATKVSLLLLAIAVIVIVEGGEG) form the signal peptide. Positions 26-39 (DSWFEEHEESDTER) are excised as a propeptide. 2 disulfide bridges follow: C50–C62 and C56–C68.

In terms of tissue distribution, expressed by the venom gland.

The protein resides in the secreted. Functionally, affects the activity of both ryanodine-sensitive calcium-release channels RyR1 and RyR2 with high potency. At lower concentrations the toxin increases full openings of the RyRs, and at higher concentrations it inhibits full openings and induce openings to subconductance levels and reduces the number of full conductance openings. The different actions may be attributed to the toxins binding at different sites on the RyRs, with binding at a high-affinity site mediating the increase in full openings and the induction of subconductance states evoked upon binding to a lower-affinity site. Insect-selective toxin that provokes a dose-dependent contractile paralysis in crickets and blowfly larvae, followed by death. The protein is Phi-liotoxin-Lw1a of Hormurus waigiensis (Australian rainforest scorpion).